Consider the following 104-residue polypeptide: Ig kappa chain V region XP-1 (104 aa).

The segment at 1–24 (ADIVMTQTPASVSEPVGGTVTIKC) is framework-1. Residues 25 to 35 (QASQSIFBBLA) form a complementarity-determining-1 region. Residues 36-49 (WYQKPGZPPKGLLY) are framework-2. Residues 50-56 (TBYTLAS) form a complementarity-determining-2 region. The segment at 57 to 88 (GVSSRFSGGGSGTBFTLTISDLECABAATYYC) is framework-3. Positions 89 to 100 (EXTGVSZBXBKG) are complementarity-determining-3. The tract at residues 101 to 104 (FGGG) is framework-4.

This Oryctolagus cuniculus (Rabbit) protein is Ig kappa chain V region XP-1.